The chain runs to 381 residues: D-rhamnosyltransferase WbpZ (381 aa).

4 residues coordinate substrate: Glu-19, His-116, Lys-206, and Val-252.

Belongs to the glycosyltransferase group 1 family. Glycosyltransferase 4 subfamily.

It localises to the cytoplasm. It carries out the reaction GDP-alpha-D-rhamnose + N-acetyl-alpha-D-glucosaminyl-di-trans,octa-cis-undecaprenyl diphosphate = alpha-D-rhamnosyl-(1-&gt;3)-N-acetyl-alpha-D-glucosaminyl-1-diphospho-di-trans,octa-cis-undecaprenol + GDP + H(+). The catalysed reaction is GDP-alpha-D-rhamnose + N-acetyl-alpha-D-galactosaminyl-di-trans,octa-cis-undecaprenyl diphosphate = alpha-D-rhamnosyl-(1-&gt;3)-N-acetyl-alpha-D-galactosaminyl-1-diphospho-di-trans,octa-cis-undecaprenol + GDP + H(+). It catalyses the reaction N-acetyl-alpha-D-glucosaminyl-di-trans,octa-cis-undecaprenyl diphosphate + GDP-alpha-D-mannose = alpha-D-mannosyl-(1-&gt;3)-N-acetyl-alpha-D-glucosaminyl-di-trans,octa-cis-undecaprenyl diphosphate + GDP + H(+). The enzyme catalyses N-acetyl-alpha-D-galactosaminyl-di-trans,octa-cis-undecaprenyl diphosphate + GDP-alpha-D-mannose = alpha-D-mannosyl-(1-&gt;3)-N-acetyl-alpha-D-galctosaminyl-1-diphospho-di-trans,octa-cis-undecaprenol + GDP + H(+). It participates in lipopolysaccharide biosynthesis; LPS oligosaccharide biosynthesis. Not activated by dithiothreitol (DTT) using GlcNAc-alpha-PO(3)-PO(3)-phenylundecyl (GlcNAc-PP-PhU) as acceptor substrate. 0.25% Triton X-100 and 0.125% NP-40 increases the activity 2.5-fold and 2-fold, respectively. 0.125% octyl glucoside has little effect on activity. Slightly increased activity with Mg(2+) and Pb(2+), while no effect with Mn(2+), Co(2+), Ni(2+), Cu(2+), Zn(2+), Ca(2+) or EDTA. Not inhibited by N-butyryl-galactosamine-alpha-benzyl or N-butyryl-glucosamine-beta-benzyl. Bis-imidazolium salts having aliphatic spacer groups with 4 or 6 carbons have little effect on activity, but spacer groups of 18-22 aliphatic carbons inhibit activity, with the most potent inhibitor being bis-imidazolium salt having a 20-carbon chain spacer length. In terms of biological role, non-processive alpha-1,3-D-rhamnosyltransferase. Catalyzes the transfer of one D-rhamnose (D-Rha) residue from donor substrate GDP-D-Rha in alpha-1-3 linkage to both GlcNAc- and GalNAc-diphosphate-lipid acceptor substrates. Is also able to transfer D-mannose (D-Man) to these acceptors at a lower level. Nucleotide sugars GDP-D-Rha, GDP-Fuc, UDP-Gal, UDP-GalNAc, UDP-GlcNAc and CMP-sialic acid cannot act as donor substrates. Only compounds with a diphosphate as the aglycone group can act as acceptor substrates. No activity is detected with compounds containing a diphosphate mimic. Fluorescent undecyl-anthracenyl group-containing compounds, such as GlcNAc-PO(3)-PO(3)-AnthrU and GalNAc-PO(3)-PO(3)-AnthrU, are also good acceptor substrates. Involved in the biosynthesis of the common polysaccharide antigen (CPA), also called A band, which is one of the two major cell surface O-antigens of the P.aeruginosa lipopolysaccharide. Involved in susceptibility to antibiotic colistin. The sequence is that of D-rhamnosyltransferase WbpZ from Pseudomonas aeruginosa (strain ATCC 15692 / DSM 22644 / CIP 104116 / JCM 14847 / LMG 12228 / 1C / PRS 101 / PAO1).